Here is an 890-residue protein sequence, read N- to C-terminus: tRNase Z TRZ3, mitochondrial (890 aa).

Residues 1–44 (MINSMPYLHKNLRLLRLLSSKSSPFPLSLRPFSPRSFSLSTLFS) constitute a mitochondrion transit peptide. The interval 46 to 67 (SSSSSSMENNEATNGSKSSSNS) is disordered.

This sequence belongs to the RNase Z family. Homodimer. Zn(2+) is required as a cofactor. It depends on Ca(2+) as a cofactor. Requires Mn(2+) as cofactor. The cofactor is Mg(2+).

Its subcellular location is the mitochondrion. The protein resides in the nucleus. It catalyses the reaction Endonucleolytic cleavage of RNA, removing extra 3' nucleotides from tRNA precursor, generating 3' termini of tRNAs. A 3'-hydroxy group is left at the tRNA terminus and a 5'-phosphoryl group is left at the trailer molecule.. Functionally, zinc phosphodiesterase, which displays tRNA 3'-processing endonuclease activity. Involved in tRNA maturation, by removing a 3'-trailer from precursor tRNA. Can process the mitochondrial tRNA-like structures (t-elements). Involved in the processing of small nucleolar RNAs (snoRNAs). In Arabidopsis thaliana (Mouse-ear cress), this protein is tRNase Z TRZ3, mitochondrial.